The sequence spans 525 residues: GMP synthase [glutamine-hydrolyzing] (525 aa).

The region spanning 13–202 (TILVLDFGSQ…AVDLCHAKQN (190 aa)) is the Glutamine amidotransferase type-1 domain. Catalysis depends on C89, which acts as the Nucleophile. Residues H176 and E178 contribute to the active site. Residues 203–400 (WTMKNFIGTE…LGISHELVWR (198 aa)) enclose the GMPS ATP-PPase domain. Residue 231 to 237 (SGGVDST) coordinates ATP. 4 residues coordinate XMP: R304, D462, K517, and E523.

Homodimer. It depends on Mg(2+) as a cofactor.

Its subcellular location is the cytoplasm. The protein resides in the cytosol. The catalysed reaction is XMP + L-glutamine + ATP + H2O = GMP + L-glutamate + AMP + diphosphate + 2 H(+). It functions in the pathway purine metabolism; GMP biosynthesis; GMP from XMP (L-Gln route): step 1/1. In terms of biological role, catalyzes the conversion of xanthine monophosphate (XMP) to GMP in the presence of glutamine and ATP through an adenyl-XMP intermediate. This Candida glabrata (strain ATCC 2001 / BCRC 20586 / JCM 3761 / NBRC 0622 / NRRL Y-65 / CBS 138) (Yeast) protein is GMP synthase [glutamine-hydrolyzing] (GUA1).